The primary structure comprises 522 residues: Glutamate--cysteine ligase (522 aa).

This sequence belongs to the glutamate--cysteine ligase type 1 family. Type 1 subfamily.

It carries out the reaction L-cysteine + L-glutamate + ATP = gamma-L-glutamyl-L-cysteine + ADP + phosphate + H(+). It participates in sulfur metabolism; glutathione biosynthesis; glutathione from L-cysteine and L-glutamate: step 1/2. This chain is Glutamate--cysteine ligase, found in Vibrio campbellii (strain ATCC BAA-1116).